The chain runs to 449 residues: Rubisco accumulation factor 1.2, chloroplastic (449 aa).

The N-terminal 61 residues, 1 to 61 (MFSLKSLISS…NMIPKNPPAR (61 aa)), are a transit peptide targeting the chloroplast. Residues 75-264 (IPTQFRSLDS…KAKNRLNTEL (190 aa)) form an N-terminal alpha-helix region. The stretch at 262-288 (TELYGDKEAEKEKEKKKKEEEVKAIRI) forms a coiled coil. Positions 288–434 (IPVVRLKFGE…GMVVLVVRPP (147 aa)) are C-terminal beta sheet.

Belongs to the RAF family. Homodimer.

The protein resides in the plastid. It localises to the chloroplast. Its function is as follows. Required for assembly or stability of RuBisCO. Acts at a postchaperonin step to fold and/or assemble the large subunit (rbcL) into RuBisCO. RAF1 brackets an rbcL dimer (rbcL(2)), leading to rbcL(8)-RAF1(4) complex formation. In the next step, RBCS displaces RAF1, thus resulting in holoenzyme formation. This is Rubisco accumulation factor 1.2, chloroplastic from Arabidopsis thaliana (Mouse-ear cress).